Reading from the N-terminus, the 671-residue chain is DNA ligase (671 aa).

NAD(+) contacts are provided by residues 32 to 36 (DAEYD), 81 to 82 (SL), and E113. K115 acts as the N6-AMP-lysine intermediate in catalysis. R136, E173, K290, and K314 together coordinate NAD(+). Zn(2+)-binding residues include C408, C411, C426, and C432. Residues 593 to 671 (EIDSPFAGKT…EAEMMRLLGE (79 aa)) form the BRCT domain.

It belongs to the NAD-dependent DNA ligase family. LigA subfamily. Requires Mg(2+) as cofactor. Mn(2+) is required as a cofactor.

The catalysed reaction is NAD(+) + (deoxyribonucleotide)n-3'-hydroxyl + 5'-phospho-(deoxyribonucleotide)m = (deoxyribonucleotide)n+m + AMP + beta-nicotinamide D-nucleotide.. DNA ligase that catalyzes the formation of phosphodiester linkages between 5'-phosphoryl and 3'-hydroxyl groups in double-stranded DNA using NAD as a coenzyme and as the energy source for the reaction. It is essential for DNA replication and repair of damaged DNA. The chain is DNA ligase from Klebsiella pneumoniae subsp. pneumoniae (strain ATCC 700721 / MGH 78578).